Here is a 248-residue protein sequence, read N- to C-terminus: 3-deoxy-manno-octulosonate cytidylyltransferase (248 aa).

Belongs to the KdsB family.

The protein localises to the cytoplasm. It carries out the reaction 3-deoxy-alpha-D-manno-oct-2-ulosonate + CTP = CMP-3-deoxy-beta-D-manno-octulosonate + diphosphate. It participates in nucleotide-sugar biosynthesis; CMP-3-deoxy-D-manno-octulosonate biosynthesis; CMP-3-deoxy-D-manno-octulosonate from 3-deoxy-D-manno-octulosonate and CTP: step 1/1. It functions in the pathway bacterial outer membrane biogenesis; lipopolysaccharide biosynthesis. Its function is as follows. Activates KDO (a required 8-carbon sugar) for incorporation into bacterial lipopolysaccharide in Gram-negative bacteria. The sequence is that of 3-deoxy-manno-octulosonate cytidylyltransferase from Salmonella typhi.